The chain runs to 172 residues: Adenine phosphoribosyltransferase (172 aa).

Belongs to the purine/pyrimidine phosphoribosyltransferase family. As to quaternary structure, homodimer.

Its subcellular location is the cytoplasm. It catalyses the reaction AMP + diphosphate = 5-phospho-alpha-D-ribose 1-diphosphate + adenine. Its pathway is purine metabolism; AMP biosynthesis via salvage pathway; AMP from adenine: step 1/1. Functionally, catalyzes a salvage reaction resulting in the formation of AMP, that is energically less costly than de novo synthesis. In Prochlorococcus marinus (strain MIT 9303), this protein is Adenine phosphoribosyltransferase.